Consider the following 351-residue polypeptide: Translation initiation factor eIF2B subunit beta (351 aa).

The protein belongs to the eIF-2B alpha/beta/delta subunits family. Component of the translation initiation factor 2B (eIF2B) complex which is a heterodecamer of two sets of five different subunits: alpha, beta, gamma, delta and epsilon. Subunits alpha, beta and delta comprise a regulatory subcomplex and subunits epsilon and gamma comprise a catalytic subcomplex. Within the complex, the hexameric regulatory complex resides at the center, with the two heterodimeric catalytic subcomplexes bound on opposite sides.

The protein resides in the cytoplasm. It localises to the cytosol. Its activity is regulated as follows. Activated by the chemical integrated stress response (ISR) inhibitor ISRIB which stimulates guanine nucleotide exchange factor activity for both phosphorylated and unphosphorylated eIF2. Acts as a component of the translation initiation factor 2B (eIF2B) complex, which catalyzes the exchange of GDP for GTP on eukaryotic initiation factor 2 (eIF2) gamma subunit. Its guanine nucleotide exchange factor activity is repressed when bound to eIF2 complex phosphorylated on the alpha subunit, thereby limiting the amount of methionyl-initiator methionine tRNA available to the ribosome and consequently global translation is repressed. The chain is Translation initiation factor eIF2B subunit beta (EIF2B2) from Oryctolagus cuniculus (Rabbit).